Reading from the N-terminus, the 919-residue chain is Translocase of chloroplast 101, chloroplastic (919 aa).

2 disordered regions span residues 20-47 and 64-211; these read SASR…VIEG and VDDE…NETR. A compositionally biased stretch (basic and acidic residues) spans 73–88; the sequence is SENKAVVETEKVESKP. Over residues 96 to 128 the composition is skewed to acidic residues; that stretch reads FAEEDGDSDADAEDEDDEDDEDDDEDDDDEDDK. The span at 182–207 shows a compositional bias: polar residues; it reads QRPNGAPSTQLTATTEENANSDTAEG. An AIG1-type G domain is found at 284 to 513; that stretch reads DFACTILVLG…KLQETATPGR (230 aa). The tract at residues 293–300 is G1; it reads GKTGVGKS. 296–301 provides a ligand contact to GTP; the sequence is GVGKSA. Ser300 provides a ligand contact to Mg(2+). Residues 319–323 are G2; it reads PSTNK. Positions 340-343 are G3; the sequence is DTPG. A G4 region spans residues 412 to 415; the sequence is THAS. Residues His413 and 461-462 contribute to the GTP site; that span reads EN. The interval 461–463 is G5; that stretch reads ENH. Disordered regions lie at residues 540-585 and 611-650; these read LPDE…LTKE and RRRK…PMPD. A compositionally biased stretch (acidic residues) spans 543 to 567; it reads EQLDESDESDDDEEEEDSEADDYDE. Positions 574-585 are enriched in basic and acidic residues; that stretch reads LSKEELEELTKE. Acidic residues predominate over residues 629–638; that stretch reads AQPDEADDEA. Positions 641–650 are enriched in low complexity; the sequence is PAAVPVPMPD. A helical transmembrane segment spans residues 893–914; sequence MVLIGIVPILRSLINCRFGFGG.

It belongs to the TRAFAC class TrmE-Era-EngA-EngB-Septin-like GTPase superfamily. AIG1/Toc34/Toc159-like paraseptin GTPase family. TOC159 subfamily. Part of the TOC core complex. Requires Mg(2+) as cofactor.

The protein localises to the plastid. It localises to the chloroplast outer membrane. GTPase involved in protein precursor import into chloroplasts. Seems to recognize chloroplast-destined precursor proteins and regulate their presentation to the translocation channel through GTP hydrolysis. Probably specialized in the import of nuclear encoded non-photosynthetic preproteins from the cytoplasm to the chloroplast. The chain is Translocase of chloroplast 101, chloroplastic from Physcomitrium patens (Spreading-leaved earth moss).